A 559-amino-acid polypeptide reads, in one-letter code: Potassium-transporting ATPase potassium-binding subunit (559 aa).

The next 13 helical transmembrane spans lie at 5–25 (GFLL…PLGS), 27–47 (LARL…RILW), 63–83 (LLAL…LLFW), 132–152 (GLTV…FALI), 170–190 (LVRI…LFFI), 253–273 (LAQM…FGEA), 283–303 (LLWA…WAEV), 327–347 (FGVL…CGAV), 356–376 (ALGG…FGGV), 379–399 (GLYG…LMIG), 416–436 (MTAL…ALAM), 484–504 (LLAF…MAIA), and 524–544 (GALF…LTFI).

It belongs to the KdpA family. As to quaternary structure, the system is composed of three essential subunits: KdpA, KdpB and KdpC.

It localises to the cell inner membrane. Its function is as follows. Part of the high-affinity ATP-driven potassium transport (or Kdp) system, which catalyzes the hydrolysis of ATP coupled with the electrogenic transport of potassium into the cytoplasm. This subunit binds the periplasmic potassium ions and delivers the ions to the membrane domain of KdpB through an intramembrane tunnel. This Salmonella enteritidis PT4 (strain P125109) protein is Potassium-transporting ATPase potassium-binding subunit.